A 456-amino-acid chain; its full sequence is Exodeoxyribonuclease 7 large subunit (456 aa).

The protein belongs to the XseA family. Heterooligomer composed of large and small subunits.

The protein localises to the cytoplasm. It carries out the reaction Exonucleolytic cleavage in either 5'- to 3'- or 3'- to 5'-direction to yield nucleoside 5'-phosphates.. Bidirectionally degrades single-stranded DNA into large acid-insoluble oligonucleotides, which are then degraded further into small acid-soluble oligonucleotides. This chain is Exodeoxyribonuclease 7 large subunit, found in Lactobacillus delbrueckii subsp. bulgaricus (strain ATCC 11842 / DSM 20081 / BCRC 10696 / JCM 1002 / NBRC 13953 / NCIMB 11778 / NCTC 12712 / WDCM 00102 / Lb 14).